A 399-amino-acid polypeptide reads, in one-letter code: S-adenosylmethionine synthase (399 aa).

His-17 contacts ATP. Asp-19 is a binding site for Mg(2+). Residue Glu-45 coordinates K(+). L-methionine-binding residues include Glu-58 and Gln-101. Positions 101-111 are flexible loop; that stretch reads QSADIAMGVDQ. ATP-binding positions include 177 to 179, 244 to 245, Asp-253, 259 to 260, Ala-276, and Lys-280; these read DGK, RF, and RK. Position 253 (Asp-253) interacts with L-methionine. Lys-284 lines the L-methionine pocket.

This sequence belongs to the AdoMet synthase family. In terms of assembly, homotetramer; dimer of dimers. It depends on Mg(2+) as a cofactor. The cofactor is K(+).

It localises to the cytoplasm. It catalyses the reaction L-methionine + ATP + H2O = S-adenosyl-L-methionine + phosphate + diphosphate. It participates in amino-acid biosynthesis; S-adenosyl-L-methionine biosynthesis; S-adenosyl-L-methionine from L-methionine: step 1/1. Catalyzes the formation of S-adenosylmethionine (AdoMet) from methionine and ATP. The overall synthetic reaction is composed of two sequential steps, AdoMet formation and the subsequent tripolyphosphate hydrolysis which occurs prior to release of AdoMet from the enzyme. The chain is S-adenosylmethionine synthase from Bacillus thuringiensis (strain Al Hakam).